We begin with the raw amino-acid sequence, 671 residues long: NADH-quinone oxidoreductase subunit G (671 aa).

The 78-residue stretch at 1–78 folds into the 2Fe-2S ferredoxin-type domain; it reads MIKLNIDGSE…GMVIHTDTPM (78 aa). Positions 34, 45, 48, and 62 each coordinate [2Fe-2S] cluster. A 4Fe-4S His(Cys)3-ligated-type domain is found at 78 to 117; it reads MVKKAREGVMEFLLINHPLDCPICDQGGECDLQDQAFRYG. Residues His94, Cys98, Cys101, Cys107, Cys146, Cys149, Cys152, and Cys196 each coordinate [4Fe-4S] cluster. The 4Fe-4S Mo/W bis-MGD-type domain occupies 215-271; the sequence is LKHTASIGVHDAEGSNIRIDSRGDEVMRILPRVNEEINEEWLSDKNRFSYDGLKYQR.

It belongs to the complex I 75 kDa subunit family. [2Fe-2S] cluster is required as a cofactor. It depends on [4Fe-4S] cluster as a cofactor.

The enzyme catalyses a quinone + NADH + 5 H(+)(in) = a quinol + NAD(+) + 4 H(+)(out). In terms of biological role, NDH-1 shuttles electrons from NADH, via FMN and iron-sulfur (Fe-S) centers, to quinones in the respiratory chain. Couples the redox reaction to proton translocation (for every two electrons transferred, four hydrogen ions are translocated across the cytoplasmic membrane), and thus conserves the redox energy in a proton gradient. This chain is NADH-quinone oxidoreductase subunit G (nuoG), found in Rickettsia felis (strain ATCC VR-1525 / URRWXCal2) (Rickettsia azadi).